Here is a 456-residue protein sequence, read N- to C-terminus: Esterase MT1326 (456 aa).

3 LysM domains span residues 3–50, 54–101, and 105–152; these read STHA…RLIM, TRYT…RLIM, and TRYT…VLVI. Residues Ser-294, Asp-391, and His-425 contribute to the active site.

Belongs to the AB hydrolase superfamily.

Its subcellular location is the secreted. The protein resides in the cell wall. It carries out the reaction a fatty acid ester + H2O = an aliphatic alcohol + a fatty acid + H(+). In terms of biological role, exhibits lipolytic activity with medium chain length esters as optimum substrates. This chain is Esterase MT1326, found in Mycobacterium tuberculosis (strain CDC 1551 / Oshkosh).